Reading from the N-terminus, the 339-residue chain is Cathepsin L (339 aa).

An N-terminal signal peptide occupies residues 1 to 17; that stretch reads MRTVLVALLALVALTQA. The propeptide at 18–121 is activation peptide; it reads ISPLDLIKEE…ATYIPPAHVT (104 aa). Asn-96 is a glycosylation site (N-linked (GlcNAc...) asparagine). 3 cysteine pairs are disulfide-bonded: Cys-143–Cys-186, Cys-177–Cys-219, and Cys-278–Cys-328. Cys-146 is a catalytic residue. His-285 is an active-site residue. A propeptide spanning residues 295-298 is cleaved from the precursor; it reads DESG. The active site involves Asn-306.

It belongs to the peptidase C1 family. Dimer of a heavy and a light chain linked by disulfide bonds.

The protein localises to the lysosome. The catalysed reaction is Specificity close to that of papain. As compared to cathepsin B, cathepsin L exhibits higher activity toward protein substrates, but has little activity on Z-Arg-Arg-NHMec, and no peptidyl-dipeptidase activity.. Its function is as follows. Important for the overall degradation of proteins in lysosomes. Required for differentiation of imaginal disks. This chain is Cathepsin L, found in Sarcophaga peregrina (Flesh fly).